A 337-amino-acid polypeptide reads, in one-letter code: Adenosine deaminase (337 aa).

2 residues coordinate Zn(2+): His12 and His14. Substrate contacts are provided by His14, Asp16, and Gly170. His197 contributes to the Zn(2+) binding site. The Proton donor role is filled by Glu200. Asp278 contributes to the Zn(2+) binding site. Substrate is bound at residue Asp279.

This sequence belongs to the metallo-dependent hydrolases superfamily. Adenosine and AMP deaminases family. Adenosine deaminase subfamily. The cofactor is Zn(2+).

It carries out the reaction adenosine + H2O + H(+) = inosine + NH4(+). The catalysed reaction is 2'-deoxyadenosine + H2O + H(+) = 2'-deoxyinosine + NH4(+). Its function is as follows. Catalyzes the hydrolytic deamination of adenosine and 2-deoxyadenosine. The chain is Adenosine deaminase from Pectobacterium atrosepticum (strain SCRI 1043 / ATCC BAA-672) (Erwinia carotovora subsp. atroseptica).